Consider the following 363-residue polypeptide: Diheme-cytochrome-encapsulin shell fusion protein (363 aa).

Residues 1–36 (MVMGILNTFKKVYAVTGFFALLAVFSLSQVGSSAFA) form the signal peptide. Positions 37 to 74 (ACAKVDDCFSCHTTQELNAVHKNTPYQGQSCIVCHKAF) are diheme c-type cytochrome. Heme-binding residues include C44, C47, H48, C67, C70, and H71. The interval 75 to 94 (AADDTCSDAKDGRFAKISSE) is linker. The encapsulin domain stretch occupies residues 95–363 (ININKEDWNK…KCPQAICTLE (269 aa)).

Belongs to the encapsulin family. Family 1 subfamily. As to quaternary structure, the encapsulin nanocompartment is probably formed by 180 monomers, with the N-terminus (diheme domain) inside. There are 36 pores where the pentamers meet as well as 3-fold axis channels and dimer channels. Heme serves as cofactor.

The protein resides in the encapsulin nanocompartment. Its function is as follows. Fusion of the shell and cargo protein of a type 1 encapsulin nanocompartment. Protein missing its signal peptide makes 33 nm particles in E.coli (called cEnc), protein missing its signal peptide and diheme domain (residues 1-86, called Enc) makes 29 nm particles. The cEnc nancompartment encloses c-type heme. The cargo protein NIR-HAO (AC P0DV45) is probably targeted to the nanocompartment by its association with the diheme domain in cEnc; removal of the diheme domain in Enc halves the amount of cargo. The protein is Diheme-cytochrome-encapsulin shell fusion protein of Kuenenia stuttgartiensis.